Here is a 629-residue protein sequence, read N- to C-terminus: Keratin, type II cytoskeletal 3 (629 aa).

Residues 1-182 (MNRQVCKTSG…DPQIGQVRAQ (182 aa)) are head. Ser13 and Ser62 each carry phosphoserine. Residues 183–218 (EREQIKTLNNKFASFIDKVRFLEQQNKVLETKWELL) form a coil 1A region. An IF rod domain is found at 183-498 (EREQIKTLNN…KLLEGEESRM (316 aa)). The segment at 219–239 (QRQGPNSVTGTNNLEPLFENR) is linker 1. Residues 240 to 331 (INYLRSYLDS…TLYDAELSQM (92 aa)) form a coil 1B region. Lys281 carries the post-translational modification N6,N6-dimethyllysine. The linker 12 stretch occupies residues 332–355 (QSHVSDMSVVLSMDNNRSLDLDSI). Ser349 is modified (phosphoserine). Residues 356-494 (IAEVRAQYED…ATYRKLLEGE (139 aa)) are coil 2. The tract at residues 495 to 629 (ESRMSGECQS…FSQSSQRYSR (135 aa)) is tail. The disordered stretch occupies residues 603-629 (SGGGFSSGSSSRGSSVKFSQSSQRYSR). The segment covering 618-629 (VKFSQSSQRYSR) has biased composition (polar residues).

It belongs to the intermediate filament family. As to quaternary structure, heterotetramer of two type I and two type II keratins. Keratin-3 associates with keratin-12. As to expression, cornea specific. Expressed in the basal cells of corneal epithelium and stroma. Also expressed in esophageal epithelium.

The protein is Keratin, type II cytoskeletal 3 (KRT3) of Oryctolagus cuniculus (Rabbit).